A 639-amino-acid chain; its full sequence is ATP-dependent rRNA helicase spb4 (639 aa).

A Q motif motif is present at residues 14–42 (WEAVSPSLSEWVLDAVASWGFSKMTPVQA). A Helicase ATP-binding domain is found at 45–249 (IPLFMAHKDV…RVGLRNPVKV (205 aa)). 58–65 (AVTGSGKT) contributes to the ATP binding site. The short motif at 197-200 (DEAD) is the DEAD box element. Residues 283-437 (TLRPILTSLQ…PISISDSDAS (155 aa)) form the Helicase C-terminal domain. The stretch at 521 to 624 (AYKDKQREKR…LRRAEKAAGK (104 aa)) forms a coiled coil. Residues 536 to 639 (QESAEAGAQQ…GDDDEFEGFD (104 aa)) are disordered. The segment covering 575–622 (KHLQQEKRRWEKMTEEEKQKARETQKMLEEIRQKNEEARALRRAEKAA) has biased composition (basic and acidic residues). Residues 628–639 (NDGDDDEFEGFD) are compositionally biased toward acidic residues.

Belongs to the DEAD box helicase family. DDX55/SPB4 subfamily. Component of pre-60S ribosomal complexes.

The protein localises to the nucleus. It is found in the nucleolus. The catalysed reaction is ATP + H2O = ADP + phosphate + H(+). In terms of biological role, ATP-binding RNA helicase involved in the biogenesis of 60S ribosomal subunits. Binds 90S pre-ribosomal particles and dissociates from pre-60S ribosomal particles after processing of 27SB pre-rRNA. Required for the normal formation of 18S rRNA through the processing of pre-rRNAs at sites A0, A1 and A2, and the normal formation of 25S and 5.8S rRNAs through the processing of pre-rRNAs at sites C1 and C2. The sequence is that of ATP-dependent rRNA helicase spb4 from Aspergillus terreus (strain NIH 2624 / FGSC A1156).